An 830-amino-acid chain; its full sequence is ABC transporter G family member STR (830 aa).

Over 1 to 551 the chain is Cytoplasmic; the sequence is MAKFKRTDTN…RTTLNVIRTP (551 aa). The region spanning 46–297 is the ABC transporter domain; the sequence is LEFNNLSYSV…LAGFARPVPD (252 aa). 90–97 serves as a coordination point for ATP; the sequence is GPSGAGKS. 3 disordered regions span residues 333 to 356, 368 to 422, and 471 to 491; these read DQAA…PYAK, SHFS…SMQS, and SMSS…NKTP. Positions 368–378 are enriched in polar residues; it reads SHFSTGNMNSQ. Acidic residues predominate over residues 395 to 405; it reads DYEDDDDEDEF. Positions 471–483 are enriched in low complexity; it reads SMSSSQFSMTQQT. Residues 552-572 form a helical membrane-spanning segment; sequence ELFLSREIVLTVMGLVLSSFF. Residues 573–588 are Extracellular-facing; it reads KKLSHFDFKTINHLLN. A helical transmembrane segment spans residues 589–609; it reads FYIFTICLVFFSSNDAVPTFI. Residues 610–630 are Cytoplasmic-facing; it reads QERFIFIRETSHNAYRASSYV. A helical membrane pass occupies residues 631 to 651; the sequence is ISSLIVYLPFFAIQGFTFAGI. Over 652–661 the chain is Extracellular; the sequence is TQYILHLNSS. An N-linked (GlcNAc...) asparagine glycan is attached at N659. Residues 662–682 form a helical membrane-spanning segment; it reads ILSFWLILYSSLVTSNAYVML. The Cytoplasmic portion of the chain corresponds to 683–690; sequence VSALVPSY. A helical transmembrane segment spans residues 691–711; sequence ITGYAVVIATTALFFLTCGFF. Residues 712–798 are Extracellular-facing; the sequence is LKRTQIPLVW…LFSMDIREEN (87 aa). Residues N771 and N780 are each glycosylated (N-linked (GlcNAc...) asparagine). A helical transmembrane segment spans residues 799–819; that stretch reads IWLDIVILLAWGVLYRLFFYV. Over 820–830 the chain is Cytoplasmic; the sequence is VLRFYSKNERK.

The protein belongs to the ABC transporter superfamily. ABCG family. Stunted arbuscule (STR) subfamily. As to quaternary structure, heterodimerizes with STR2; the resulting transporter is located in the peri-arbuscular membrane.

It localises to the cell membrane. Functionally, together with STR2, required for arbuscule development in arbuscular mycorrhizal (AM) symbiosis. The protein is ABC transporter G family member STR of Petunia hybrida (Petunia).